Here is a 293-residue protein sequence, read N- to C-terminus: Large ribosomal subunit protein uL4c (293 aa).

Residues 1 to 50 constitute a chloroplast transit peptide; it reads MATSTSSSLSLSFFSSSLFSSKSRNFSSKPILKLPSSSHSQTSLSLSIKS. Disordered regions lie at residues 107–138 and 259–293; these read EVRG…PGGG and YGVD…EPAE. The span at 116–126 shows a compositional bias: basic residues; sequence YPQKKTGRARR. The segment covering 263–293 has biased composition (acidic residues); sequence TLEDEDEEEEEEEEGEEVDDGVEDGTPEPAE.

It belongs to the universal ribosomal protein uL4 family. Component of the chloroplast large ribosomal subunit (LSU). Mature 70S chloroplast ribosomes of higher plants consist of a small (30S) and a large (50S) subunit. The 30S small subunit contains 1 molecule of ribosomal RNA (16S rRNA) and 24 different proteins. The 50S large subunit contains 3 rRNA molecules (23S, 5S and 4.5S rRNA) and 33 different proteins. As to expression, highly expressed in cotyledon and weakly in roots.

It is found in the plastid. The protein resides in the chloroplast. Its function is as follows. Component of the chloroplast ribosome (chloro-ribosome), a dedicated translation machinery responsible for the synthesis of chloroplast genome-encoded proteins, including proteins of the transcription and translation machinery and components of the photosynthetic apparatus. In Spinacia oleracea (Spinach), this protein is Large ribosomal subunit protein uL4c (RPL4).